A 78-amino-acid polypeptide reads, in one-letter code: Large ribosomal subunit protein bL28 (78 aa).

The interval 1–20 is disordered; the sequence is MSRVCQVTGKGPVTGNNISH.

It belongs to the bacterial ribosomal protein bL28 family.

The sequence is that of Large ribosomal subunit protein bL28 from Stutzerimonas stutzeri (strain A1501) (Pseudomonas stutzeri).